The sequence spans 269 residues: 5'-nucleotidase SurE (269 aa).

The a divalent metal cation site is built by Asp11, Asp12, Ser43, and Asn101.

This sequence belongs to the SurE nucleotidase family. It depends on a divalent metal cation as a cofactor.

The protein resides in the cytoplasm. The catalysed reaction is a ribonucleoside 5'-phosphate + H2O = a ribonucleoside + phosphate. Functionally, nucleotidase that shows phosphatase activity on nucleoside 5'-monophosphates. The sequence is that of 5'-nucleotidase SurE from Synechococcus sp. (strain CC9605).